A 563-amino-acid polypeptide reads, in one-letter code: Arginine--tRNA ligase (563 aa).

The 'HIGH' region motif lies at 121–131; that stretch reads PNIAKPFSIGH.

The protein belongs to the class-I aminoacyl-tRNA synthetase family. Monomer.

It localises to the cytoplasm. It carries out the reaction tRNA(Arg) + L-arginine + ATP = L-arginyl-tRNA(Arg) + AMP + diphosphate. The chain is Arginine--tRNA ligase from Streptococcus agalactiae serotype III (strain NEM316).